Here is a 120-residue protein sequence, read N- to C-terminus: Large ribosomal subunit protein uL18 (120 aa).

Residues 1 to 23 (MKLSRKESVRRRHQRVRRKINGT) form a disordered region. The segment covering 8-20 (SVRRRHQRVRRKI) has biased composition (basic residues).

This sequence belongs to the universal ribosomal protein uL18 family. In terms of assembly, part of the 50S ribosomal subunit; part of the 5S rRNA/L5/L18/L25 subcomplex. Contacts the 5S and 23S rRNAs.

In terms of biological role, this is one of the proteins that bind and probably mediate the attachment of the 5S RNA into the large ribosomal subunit, where it forms part of the central protuberance. This Microcystis aeruginosa (strain NIES-843 / IAM M-2473) protein is Large ribosomal subunit protein uL18.